We begin with the raw amino-acid sequence, 81 residues long: ATP synthase subunit c (81 aa).

The next 2 helical transmembrane spans lie at alanine 7 to glycine 27 and leucine 57 to alanine 77.

This sequence belongs to the ATPase C chain family. In terms of assembly, F-type ATPases have 2 components, F(1) - the catalytic core - and F(0) - the membrane proton channel. F(1) has five subunits: alpha(3), beta(3), gamma(1), delta(1), epsilon(1). F(0) has four main subunits: a(1), b(1), b'(1) and c(10-14). The alpha and beta chains form an alternating ring which encloses part of the gamma chain. F(1) is attached to F(0) by a central stalk formed by the gamma and epsilon chains, while a peripheral stalk is formed by the delta, b and b' chains.

It is found in the cellular thylakoid membrane. F(1)F(0) ATP synthase produces ATP from ADP in the presence of a proton or sodium gradient. F-type ATPases consist of two structural domains, F(1) containing the extramembraneous catalytic core and F(0) containing the membrane proton channel, linked together by a central stalk and a peripheral stalk. During catalysis, ATP synthesis in the catalytic domain of F(1) is coupled via a rotary mechanism of the central stalk subunits to proton translocation. In terms of biological role, key component of the F(0) channel; it plays a direct role in translocation across the membrane. A homomeric c-ring of between 10-14 subunits forms the central stalk rotor element with the F(1) delta and epsilon subunits. This chain is ATP synthase subunit c, found in Synechococcus sp. (strain CC9902).